Consider the following 101-residue polypeptide: Small ribosomal subunit protein uS10 (101 aa).

Belongs to the universal ribosomal protein uS10 family. In terms of assembly, part of the 30S ribosomal subunit.

In terms of biological role, involved in the binding of tRNA to the ribosomes. The chain is Small ribosomal subunit protein uS10 from Corynebacterium efficiens (strain DSM 44549 / YS-314 / AJ 12310 / JCM 11189 / NBRC 100395).